A 334-amino-acid chain; its full sequence is Chorismatase (334 aa).

Substrate is bound by residues Tyr143, Arg150, Tyr203, and Arg216. The Proton acceptor role is filled by Glu328.

It belongs to the FkbO/Hyg5 family. In terms of assembly, monomer.

The catalysed reaction is chorismate + H2O = (3R,4R)-3,4-dihydroxy-3,4-dihydrobenzoate + pyruvate. Its function is as follows. Involved in the biosynthesis of the macrocyclic amino acid-linked polyketides rapamycin which is a potent immunosuppressant that prevents T-cell proliferation through initial binding to the immunophilin FKBP12. Catalyzes the hydrolysis of chorismate via a 1,4-conjugate elimination of water to yield (4R,5R)-4,5-dihydroxycyclohexa-1,5-dienecarboxylic acid (DCDC). This is Chorismatase (rapK) from Streptomyces rapamycinicus (strain ATCC 29253 / DSM 41530 / NRRL 5491 / AYB-994) (Streptomyces hygroscopicus (strain ATCC 29253)).